The following is a 486-amino-acid chain: UDP-N-acetylmuramate--L-alanine ligase (486 aa).

Residue 129–135 coordinates ATP; it reads GTHGKTT.

Belongs to the MurCDEF family.

The protein localises to the cytoplasm. The catalysed reaction is UDP-N-acetyl-alpha-D-muramate + L-alanine + ATP = UDP-N-acetyl-alpha-D-muramoyl-L-alanine + ADP + phosphate + H(+). Its pathway is cell wall biogenesis; peptidoglycan biosynthesis. Functionally, cell wall formation. In Vibrio vulnificus (strain YJ016), this protein is UDP-N-acetylmuramate--L-alanine ligase.